The primary structure comprises 184 residues: uncharacterized protein (184 aa).

This sequence belongs to the TorD/DmsD family.

This is an uncharacterized protein from Haemophilus influenzae (strain ATCC 51907 / DSM 11121 / KW20 / Rd).